We begin with the raw amino-acid sequence, 379 residues long: MATAGKVIKCKAAVAWEAAKPLVIEEVEVAPPQAMEVRVKILFTSLCHTDVYFWEAKGQTPVFPRIFGHEAGGIVESVGEGVTDLAPGDHVLPVFTGECKECAHCKSAESNMCDLLRINTDRGVMIGDGKSRFSINGKPIYHFVGTSTFSEYTVMHVGCVAKINPAAPLDKVCVLSCGISTGLGATINVAKPPKGSTVAIFGLGAVGLAAAEGARIAGASRIIGIDLNANRFEEARKFGCTEFVNPKDHDKPVQQVLAEMTNGGVDRSVECTGNINAMIQAFECVHDGWGVAVLVGVPHKDAEFKTHPMNFLNERTLKGTFFGNYKPRTDLPNVVELYMKKELEVEKFITHSVPFSEINTAFDLMHKGEGIRCIIRMEN.

Residues C47, T49, H69, C99, C102, C105, C113, and C177 each coordinate Zn(2+). An alcohol is bound by residues T49 and H69. T49 lines the NAD(+) pocket. Residues 202-207 (GLGAVG), D226, R231, T272, V295, 295-297 (VGV), F322, and R372 contribute to the NAD(+) site.

The protein belongs to the zinc-containing alcohol dehydrogenase family. As to quaternary structure, homodimer. Requires Zn(2+) as cofactor.

It localises to the cytoplasm. It catalyses the reaction a primary alcohol + NAD(+) = an aldehyde + NADH + H(+). It carries out the reaction a secondary alcohol + NAD(+) = a ketone + NADH + H(+). This is Alcohol dehydrogenase 1 (ADH1) from Oryza sativa subsp. indica (Rice).